A 345-amino-acid polypeptide reads, in one-letter code: Serpentine receptor class beta-13 (345 aa).

Topologically, residues 1–22 (MAGINQTKCDLGFQITFNTVYR) are extracellular. A glycan (N-linked (GlcNAc...) asparagine) is linked at Asn5. Residues 23–43 (FSQFYTFSVSSFAVPGLIYFM) traverse the membrane as a helical segment. Topologically, residues 44–58 (FKRLFQLYFHGNLKT) are cytoplasmic. Residues 59–79 (LLIAYFISILLYAVMLCFAFG) form a helical membrane-spanning segment. Residues 80–103 (YQFFVPFFIKSNCDLIINKTLFKY) are Extracellular-facing. An N-linked (GlcNAc...) asparagine glycan is attached at Asn97. A helical transmembrane segment spans residues 104-124 (IHTSVIFLLTTPMMFPLGFSI). At 125–142 (ERFTAMAMASRYENIRTL) the chain is on the cytoplasmic side. A helical membrane pass occupies residues 143 to 163 (IGPVLVIFLIIPNCIIFYFLF). Over 164–189 (QHETYDDTFISFLMLPNTTAVNFNTY) the chain is Extracellular. N-linked (GlcNAc...) asparagine glycosylation occurs at Asn180. The chain crosses the membrane as a helical span at residues 190–210 (LWFLLYLNIGNLALNVLLLLV). The Cytoplasmic segment spans residues 211–241 (HRKFKRRLLLHKTSLSTRYAIEEISQSSKFT). Residues 242-262 (LIITFTHLLFFGCNTICSILV) form a helical membrane-spanning segment. Over 263–280 (RVLGEPFFGSFINHSVAR) the chain is Extracellular. N-linked (GlcNAc...) asparagine glycosylation is present at Asn275. Residues 281 to 301 (GVNCAVPTYNLVIVVVGFVSL) traverse the membrane as a helical segment. Residues 302–345 (SKLNSRRQQEVQTTVQLKTTGKEGARNYDNITANQWATITQIGF) are Cytoplasmic-facing.

This sequence belongs to the nematode receptor-like protein srb family. As to expression, expressed in the head sensory neurons ASI, ASK and AWB. Not expressed in male somatic gonads or sperm.

The protein resides in the cell membrane. It is found in the perikaryon. Its subcellular location is the cell projection. It localises to the dendrite. Functionally, G-protein coupled receptor that antagonizes the negative effects of the gcy-35 oxygen sensor on spermatogenesis. This leads to the maintenance of mitochondrial function in developing spermatocytes and/or spermatids prior to testis maturation during the early larval stages. Regulates the navigational capacity of sperm during hyperoxic conditions ensuring the proper targeting of sperm derived from males to the fertilization site in the uterus of hermaphrodites. May act in the same signaling pathway as the neuropeptide flp-21. This chain is Serpentine receptor class beta-13, found in Caenorhabditis elegans.